The following is a 934-amino-acid chain: Isoleucine--tRNA ligase (934 aa).

The 'HIGH' region motif lies at 58-68 (PYANGEIHIGH). Residue glutamate 559 coordinates L-isoleucyl-5'-AMP. The 'KMSKS' region motif lies at 600–604 (KMSKS). Position 603 (lysine 603) interacts with ATP. Zn(2+) is bound by residues cysteine 897, cysteine 900, cysteine 917, and cysteine 920.

This sequence belongs to the class-I aminoacyl-tRNA synthetase family. IleS type 1 subfamily. Monomer. Requires Zn(2+) as cofactor.

The protein resides in the cytoplasm. The catalysed reaction is tRNA(Ile) + L-isoleucine + ATP = L-isoleucyl-tRNA(Ile) + AMP + diphosphate. Its function is as follows. Catalyzes the attachment of isoleucine to tRNA(Ile). As IleRS can inadvertently accommodate and process structurally similar amino acids such as valine, to avoid such errors it has two additional distinct tRNA(Ile)-dependent editing activities. One activity is designated as 'pretransfer' editing and involves the hydrolysis of activated Val-AMP. The other activity is designated 'posttransfer' editing and involves deacylation of mischarged Val-tRNA(Ile). This Teredinibacter turnerae (strain ATCC 39867 / T7901) protein is Isoleucine--tRNA ligase.